The sequence spans 295 residues: MRIAILSQGPQLYSTKRLVEAAQARGHDVHIINPLKCYMNINMRQPSIHIAGKELPQFDAVIPRIGASITFYGSAVLRQFEMMGVYTINDSVGISRSRDKLRSMQLLSRKGIGLPITGFANKPSDIPDLIDMVGGAPLVVKLLEGTQGIGVVLAETRKAAESVLEAFMGLKANIMVQEYIKEANGADIRCFVLGDKVIAAMKRQAKAGEFRSNLHRGGTATLVKLSPEERTTAIRAAKTMGLSLAGVDLLRSNHGPVVMEVNSSPGLEGIEAATQKDVANAIIEFIEKNANKAKS.

Residues 104–287 enclose the ATP-grasp domain; sequence MQLLSRKGIG…VANAIIEFIE (184 aa). ATP-binding positions include Lys141, 178–179, Asp187, and 211–213; these read EY and RSN. 3 residues coordinate Mg(2+): Asp248, Glu260, and Asn262. Residues Asp248, Glu260, and Asn262 each coordinate Mn(2+).

Belongs to the RimK family. Mg(2+) serves as cofactor. The cofactor is Mn(2+).

In Shewanella denitrificans (strain OS217 / ATCC BAA-1090 / DSM 15013), this protein is Probable alpha-L-glutamate ligase 1.